A 381-amino-acid chain; its full sequence is cAMP-dependent protein kinase type I-beta regulatory subunit (381 aa).

A dimerization and phosphorylation region spans residues 2 to 136; sequence ASPPACPSEE…ALAKAISKNV (135 aa). Serine 3 is subject to Phosphoserine. Residue tyrosine 21 is modified to 3'-nitrotyrosine. Positions 67–98 are disordered; the sequence is ARQKSNSQSDSHDEEVSPTPPNPVVKARRRRG. Residues serine 77 and serine 83 each carry the phosphoserine modification. Threonine 85 carries the post-translational modification Phosphothreonine. A Pseudophosphorylation motif motif is present at residues 96–100; sequence RRGGV. Position 97 is an omega-N-methylarginine (arginine 97). 3',5'-cyclic AMP contacts are provided by residues 137–254, glutamate 202, arginine 211, 255–381, glutamate 326, and arginine 335; these read LFAH…SKVS and ILES…SLTV.

The protein belongs to the cAMP-dependent kinase regulatory chain family. The inactive holoenzyme is composed of two regulatory chains and two catalytic chains. Activation by cAMP releases the two active catalytic monomers and the regulatory dimer. Interacts with PRKX; regulates this cAMP-dependent protein kinase. Interacts with C2orf88/smAKAP; this interaction may target PRKAR1B to the plasma membrane. In terms of processing, the pseudophosphorylation site binds to the substrate-binding region of the catalytic chain, resulting in the inhibition of its activity. Four types of regulatory chains are found: I-alpha, I-beta, II-alpha, and II-beta. Their expression varies among tissues and is in some cases constitutive and in others inducible.

The protein localises to the cell membrane. Its function is as follows. Regulatory subunit of the cAMP-dependent protein kinases involved in cAMP signaling in cells. This chain is cAMP-dependent protein kinase type I-beta regulatory subunit (PRKAR1B), found in Homo sapiens (Human).